The following is a 761-amino-acid chain: Zinc finger protein 711 (761 aa).

Residues Lys224, Lys235, and Lys296 each participate in a glycyl lysine isopeptide (Lys-Gly) (interchain with G-Cter in SUMO2) cross-link. 5 C2H2-type zinc fingers span residues 383–408, 414–436, 476–499, 505–527, and 533–556; these read YPCH…HPDH, YQCT…LESH, HKCK…LAVH, HVCV…MRTH, and YQCQ…KSKH. Residues 562–584 form a C2H2-type 6; atypical zinc finger; it reads YKCEHCPQAFGDERELQRHLDLF. Zn(2+) contacts are provided by Cys564, Cys567, and His580. 6 C2H2-type zinc fingers span residues 590-613, 619-641, 647-670, 676-698, 704-727, and 733-755; these read HQCP…ISVH, HKCE…SDIH, HQCR…LSVH, LKCK…MKTH, YQCE…ISIH, and HRCE…IMRH.

This sequence belongs to the krueppel C2H2-type zinc-finger protein family. In terms of assembly, interacts with PHF8.

The protein localises to the nucleus. Its function is as follows. Transcription regulator required for brain development. Probably acts as a transcription factor that binds to the promoter of target genes and recruits PHF8 histone demethylase, leading to activated expression of genes involved in neuron development, such as KDM5C. May compete with transcription factor ARX for activation of expression of KDM5C. This Mus musculus (Mouse) protein is Zinc finger protein 711 (Znf711).